Here is a 239-residue protein sequence, read N- to C-terminus: MATPAQLGLMDAASPVMEEMIYFHDHVMLVLILITCLIFYSMLVLISSKYIYRFLTDGHVIETVWTVIPAIILVVVALPSLKLLYLTDELDNPQLTIKSVGHQWYWSYEYTDYYDIEFDSYMLPLGDLSKGDARLLEVDNRVVLPVDTSVRVLVTAADVIHSWTVPSLGLKMDAVPGRLNQLALQCSRVGTFYGQCSEICGANHSFMPIVIEAVPVEVFEGWCDMMLDEESLGSLNMKR.

The Mitochondrial intermembrane segment spans residues 1 to 26; that stretch reads MATPAQLGLMDAASPVMEEMIYFHDH. A helical transmembrane segment spans residues 27 to 48; sequence VMLVLILITCLIFYSMLVLISS. Over 49-62 the chain is Mitochondrial matrix; the sequence is KYIYRFLTDGHVIE. The chain crosses the membrane as a helical span at residues 63–82; sequence TVWTVIPAIILVVVALPSLK. Over 83 to 239 the chain is Mitochondrial intermembrane; that stretch reads LLYLTDELDN…ESLGSLNMKR (157 aa). Residues His161, Cys196, Glu198, Cys200, His204, and Met207 each coordinate Cu cation. Residue Glu198 participates in Mg(2+) binding.

Belongs to the cytochrome c oxidase subunit 2 family. Component of the cytochrome c oxidase (complex IV, CIV), a multisubunit enzyme composed of a catalytic core of 3 subunits and several supernumerary subunits. The complex exists as a monomer or a dimer and forms supercomplexes (SCs) in the inner mitochondrial membrane with ubiquinol-cytochrome c oxidoreductase (cytochrome b-c1 complex, complex III, CIII). Cu cation is required as a cofactor.

It is found in the mitochondrion inner membrane. The enzyme catalyses 4 Fe(II)-[cytochrome c] + O2 + 8 H(+)(in) = 4 Fe(III)-[cytochrome c] + 2 H2O + 4 H(+)(out). Component of the cytochrome c oxidase, the last enzyme in the mitochondrial electron transport chain which drives oxidative phosphorylation. The respiratory chain contains 3 multisubunit complexes succinate dehydrogenase (complex II, CII), ubiquinol-cytochrome c oxidoreductase (cytochrome b-c1 complex, complex III, CIII) and cytochrome c oxidase (complex IV, CIV), that cooperate to transfer electrons derived from NADH and succinate to molecular oxygen, creating an electrochemical gradient over the inner membrane that drives transmembrane transport and the ATP synthase. Cytochrome c oxidase is the component of the respiratory chain that catalyzes the reduction of oxygen to water. Electrons originating from reduced cytochrome c in the intermembrane space (IMS) are transferred via the dinuclear copper A center (CU(A)) of subunit 2 and heme A of subunit 1 to the active site in subunit 1, a binuclear center (BNC) formed by heme A3 and copper B (CU(B)). The BNC reduces molecular oxygen to 2 water molecules using 4 electrons from cytochrome c in the IMS and 4 protons from the mitochondrial matrix. This is Cytochrome c oxidase subunit 2 (COII) from Branchiostoma lanceolatum (Common lancelet).